The sequence spans 160 residues: Type-1 angiotensin II receptor-associated protein (160 aa).

At 1–9 (MELPAVNLK) the chain is on the extracellular side. Residues 10 to 30 (VILLVHWLLTTWGCLAFSGSY) form a helical membrane-spanning segment. The Cytoplasmic portion of the chain corresponds to 31–53 (AWGNFTILALGVWAVAQRDSVDA). The chain crosses the membrane as a helical span at residues 54-74 (IGMFLGGLVATIFLDIIYISI). Over 75 to 86 (FYSSVAVGDTGR) the chain is Extracellular. The chain crosses the membrane as a helical span at residues 87-107 (FSAGMAIFSLLLKPFSCCLVY). Over 108-160 (HMHRERGGELPLRSDFFGPSQEHSAYQTIDSSDSPADPLASLENKGQAAPRGY) the chain is Cytoplasmic. Residues 110–122 (HRERGGELPLRSD) form an interaction with AGTR1 region. Serine 127 is modified (phosphoserine). Residues 128–160 (QEHSAYQTIDSSDSPADPLASLENKGQAAPRGY) form a disordered region. Threonine 135 carries the post-translational modification Phosphothreonine. Residues 137–149 (DSSDSPADPLASL) show a composition bias toward low complexity. Residue serine 138 is modified to Phosphoserine.

Interacts with RACK1, and with the carboxy-terminal region of AGTR1.

Its subcellular location is the endoplasmic reticulum membrane. It is found in the golgi apparatus membrane. The protein resides in the cytoplasmic vesicle membrane. In terms of biological role, appears to be a negative regulator of type-1 angiotensin II receptor-mediated signaling by regulating receptor internalization as well as mechanism of receptor desensitization such as phosphorylation. May play a role of negative regulator in cardiomyocyte hypertrophy induced by angiotensin II through an inhibition of p38 mitogen-activated protein kinase pathway. Attenuates type-1 angiotensin II receptor growth promoting effect and angiotensin II-induced phosphorylation of protein kinase AKT and of STAT3. The polypeptide is Type-1 angiotensin II receptor-associated protein (Agtrap) (Rattus norvegicus (Rat)).